We begin with the raw amino-acid sequence, 866 residues long: MSVSNLSWLKKKSQSVDITAPGFNPLGGAGKQAPQASKPPAPKTPIIEEEQNNSANTQKHPSRKSELKRFYTIDTGQKKTLDKKDGRRMSFQKPKGTIEYTVESRDSLNSIALKFDTTPNELVQLNKLFSRAVVTGQVLYVPDPEYVSSVESSPSLSPVSPLSPTSSEAEFDKTTTPDVAHPKEAPPASTVSGIRPARVVSSTSEEEEAFTEKFLKINCKYITIGKGTVSGVLLVTPNNIMFDPHKTDPLVQENGCEEYGIMCPMEEVMSAAMYKEILDSKIKESLPIELDQLSGRGSCHSKKATGVSAEDADPRARDQGNDSASTAPRSTEESLSEDAFTESELSPIREELLSSEPRQEKSSDASSESVQTVSQMEVQSLTATSEAANVPDRTSSNPGALSHETGLSGLETATKGGDKATESLQEVSGPKEQSTEVKGQDNQDSSHQESSLQQEAGEDSVSSGETVELKEKPAVLKDQQGQELKRDSETEVEELRKLWKTHSMQQAKQQRDTIQQVSQRESKHSSAAADAHGEGSSLLKEKRRHRLHKFLCLRVGKPMRKTFVSQASATMQQYAQRDKKHEYWFAVPQERTDHLYAFFIQWSPEIYAEDSGEYTREPGFIVVKKMDESEANEAPAGEAAAREWEVVSVAEYHRRIDALNTEELRTLCRRLQITTREDINSKQVAPAKADLEPESFRPNLSDPSELLLPDQIEKLTKHLPPRTIGYPWTLVYGTGKHGTSLKTLYRTMTGLDTPVLMVIKDSDGQVFGALASEPFKVSDGFYGTGETFVFTFCPEFEVFKWTGDNMFFIKGDMDSLAFGGGGGEFALWLDGDLYHGRSHSCKTFGNHTLSKKEDFFIQDIEIWAFE.

Residues 1–92 are disordered; it reads MSVSNLSWLK…KKDGRRMSFQ (92 aa). Residues 63 to 88 show a composition bias toward basic and acidic residues; the sequence is RKSELKRFYTIDTGQKKTLDKKDGRR. A Phosphoserine modification is found at serine 90. One can recognise a LysM domain in the interval 98 to 141; sequence IEYTVESRDSLNSIALKFDTTPNELVQLNKLFSRAVVTGQVLYV. Threonine 118 is modified (phosphothreonine). The span at 150 to 168 shows a compositional bias: low complexity; sequence VESSPSLSPVSPLSPTSSE. The segment at 150–202 is disordered; that stretch reads VESSPSLSPVSPLSPTSSEAEFDKTTTPDVAHPKEAPPASTVSGIRPARVVSS. A compositionally biased stretch (basic and acidic residues) spans 170–184; it reads EFDKTTTPDVAHPKE. Phosphoserine occurs at positions 201, 202, and 204. Positions 213 to 268 constitute a GRAM domain; sequence KFLKINCKYITIGKGTVSGVLLVTPNNIMFDPHKTDPLVQENGCEEYGIMCPMEEV. Residues 293 to 540 are disordered; the sequence is LSGRGSCHSK…AHGEGSSLLK (248 aa). Phosphoserine occurs at positions 294, 334, and 336. Position 341 is a phosphothreonine (threonine 341). Serine 346 is subject to Phosphoserine. The segment covering 347–363 has biased composition (basic and acidic residues); it reads PIREELLSSEPRQEKSS. Over residues 364–399 the composition is skewed to polar residues; the sequence is DASSESVQTVSQMEVQSLTATSEAANVPDRTSSNPG. Residues 433–447 show a composition bias toward basic and acidic residues; sequence QSTEVKGQDNQDSSH. A compositionally biased stretch (polar residues) spans 448–465; that stretch reads QESSLQQEAGEDSVSSGE. The segment covering 483 to 497 has biased composition (basic and acidic residues); it reads ELKRDSETEVEELRK. Phosphoserine is present on serine 488. Over residues 502–519 the composition is skewed to polar residues; it reads HSMQQAKQQRDTIQQVSQ. The interval 543–570 is mediates oxidative antimutator activity; the sequence is RRHRLHKFLCLRVGKPMRKTFVSQASAT. Residues 682-703 are disordered; that stretch reads KQVAPAKADLEPESFRPNLSDP. The 162-residue stretch at 705 to 866 folds into the TLDc domain; that stretch reads ELLLPDQIEK…IQDIEIWAFE (162 aa).

This sequence belongs to the OXR1 family. Highly expressed in brain and testis.

It localises to the mitochondrion. The protein resides in the nucleus. The protein localises to the nucleolus. In terms of biological role, may be involved in protection from oxidative damage. The polypeptide is Oxidation resistance protein 1 (Oxr1) (Mus musculus (Mouse)).